The following is a 297-amino-acid chain: Homoserine kinase (297 aa).

84–94 (PPARGLGSSAT) is an ATP binding site.

It belongs to the GHMP kinase family. Homoserine kinase subfamily.

The protein resides in the cytoplasm. The enzyme catalyses L-homoserine + ATP = O-phospho-L-homoserine + ADP + H(+). The protein operates within amino-acid biosynthesis; L-threonine biosynthesis; L-threonine from L-aspartate: step 4/5. Functionally, catalyzes the ATP-dependent phosphorylation of L-homoserine to L-homoserine phosphate. The sequence is that of Homoserine kinase (thrB) from Aquifex aeolicus (strain VF5).